Consider the following 781-residue polypeptide: Catenin beta-1 (781 aa).

Alanine 2 carries the post-translational modification N-acetylalanine. The tract at residues 2 to 23 (ATQADLMELDMAMEPDRKAAVS) is interaction with VCL. Residue serine 23 is modified to Phosphoserine; by GSK3-beta; alternate. A glycan (O-linked (GlcNAc) serine; alternate) is linked at serine 23. Serine 29 bears the Phosphoserine; by GSK3-beta mark. A phosphoserine; by GSK3-beta and HIPK2 mark is found at serine 33 and serine 37. Residues 34–57 (GIHSGATTTAPSLSGKGNPEEEDV) form a disordered region. The residue at position 41 (threonine 41) is a Phosphothreonine; by GSK3-beta. At serine 45 the chain carries Phosphoserine. N6-acetyllysine is present on lysine 49. Tyrosine 64 carries the phosphotyrosine; by PTK6 modification. The residue at position 142 (tyrosine 142) is a Phosphotyrosine; by FYN and PTK6. 12 ARM repeats span residues 151 to 191 (RAIP…IMRS), 193 to 234 (QMVS…IFKS), 235 to 276 (GGIP…VRLA), 277 to 318 (GGLQ…ILAS), 319 to 360 (GGPQ…IVEA), 361 to 389 (GGMQ…RNLS), 400 to 441 (GLLG…VCQV), 442 to 484 (GGIE…AQNA), 489 to 530 (YGLP…LREQ), 531 to 571 (GAIP…EIVE), 594 to 636 (NTIP…AEGA), and 637 to 666 (TAPL…SEDK). The interaction with BCL9 stretch occupies residues 156–178 (LTKLLNDEDQVVVNKAAVMVHQL). Serine 191 carries the post-translational modification Phosphoserine. A Phosphoserine; by CDK5 modification is found at serine 246. 2 positions are modified to phosphotyrosine: tyrosine 331 and tyrosine 333. Position 552 is a phosphoserine; by AMPK (serine 552). Position 556 is a phosphothreonine (threonine 556). Cysteine 619 carries the post-translational modification S-nitrosocysteine. At serine 675 the chain carries Phosphoserine. The disordered stretch occupies residues 720 to 781 (HSGGYGQDAL…NQLAWFDTDL (62 aa)). Basic and acidic residues predominate over residues 734–745 (MMEHEMGGHHPG). Residues 772 to 781 (NQLAWFDTDL) are interaction with SCRIB.

The protein belongs to the beta-catenin family. As to quaternary structure, two separate complex-associated pools are found in the cytoplasm. The majority is present as component of an E-cadherin/ catenin adhesion complex composed of at least E-cadherin/CDH1 and beta-catenin/CTNNB1, and possibly alpha-catenin/CTNNA1; the complex is located to adherens junctions. The stable association of CTNNA1 is controversial as CTNNA1 was shown not to bind to F-actin when assembled in the complex. Alternatively, the CTNNA1-containing complex may be linked to F-actin by other proteins such as LIMA1. Binds NHERF1. Interacts with PTPRU (via the cytoplasmic juxtamembrane domain) and with EMD. Interacts with SESTD1 and TRPC4. Interacts with CAV1. Interacts with PTPRJ. Interacts with PKT7. Interacts with FAT1 (via the cytoplasmic domain). Interacts with CDK2, NDRG2 and NANOS1. Interacts with NEK2 and CDK5. Interacts with CARM1, CXADR, PCDH11Y and PTK6. Interacts with RAPGEF2. Interacts with SOX7; this interaction may lead to proteasomal degradation of active CTNNB1 and thus inhibition of Wnt/beta-catenin-stimulated transcription. Identified in a complex with HINT1 and MITF. Interacts with FHIT. Interacts with FERMT2. Identified in a complex with TCF4 and FERMT2. Another cytoplasmic pool is part of a large complex containing AXIN1, AXIN2, APC, CSNK1A1 and GSK3B that promotes phosphorylation on N-terminal Ser and Thr residues and ubiquitination of CTNNB1 via BTRC and its subsequent degradation by the proteasome. Wnt-dependent activation of DVL antagonizes the action of GSK3B. When GSK3B activity is inhibited the complex dissociates, CTNNB1 is dephosphorylated and is no longer targeted for destruction. The stabilized protein translocates to the nucleus, where it binds TCF/LEF-1 family members, BCL9, BCL9L and possibly also RUVBL1 and CHD8. Interacts with TAX1BP3 (via the PDZ domain); this interaction inhibits the transcriptional activity of CTNNB1. Interacts with AJAP1, BAIAP1 and CTNNA3. Interacts with TRPV4; the TRPV4 and CTNNB1 complex can interact with CDH1. Interacts with VCL. The CTNNB1 and TCF4 complex interacts with PML. Interacts with XIRP1. Binds CTNNBIP and EP300. CTNNB1 forms a ternary complex with LEF1 and EP300 that is disrupted by CTNNBIP1 binding. Interacts directly with AXIN1; the interaction is regulated by CDK2 phosphorylation of AXIN1. Interacts with GLIS2. Interacts with SCRIB. Interacts with TNIK and TCF7L2. Interacts with SLC30A9. Interacts with RORA. May interact with P-cadherin/CDH3. Interacts with RNF220. Interacts with CTNND2. Interacts (via the C-terminal region) with CBY1. The complex composed, at least, of APC, CTNNB1 and GSK3B interacts with JPT1; the interaction requires the inactive form of GSK3B (phosphorylated at 'Ser-9'). Interacts with DLG5. Interacts with FAM53B; promoting translocation to the nucleus. Interacts with TMEM170B. Interacts with AHI1. Interacts with GID8. Component of an cadherin:catenin adhesion complex composed of at least of CDH26, beta-catenin/CTNNB1, alpha-catenin/CTNNA1 and p120 catenin/CTNND1. Forms a complex comprising APPL1, RUVBL2, APPL2, HDAC1 and HDAC2. Interacts with IRF2BPL; mediates the ubiquitination and degradation of CTNNB1. Interacts with AMFR. Interacts with LMBR1L. Interacts with SOX30; prevents interaction of CTNNB1 with TCF7L2/TCF4 and leads to inhibition of Wnt signaling. Interacts with SOX9; inhibiting CTNNB1 activity by competing with the binding sites of TCF/LEF within CTNNB1, thereby inhibiting the Wnt signaling. Interacts with SPN/CD43 cytoplasmic tail. Interacts (when phosphorylated at Tyr-333) with isoform M2 of PKM (PKM2); promoting transcription activation. Interacts with PKP2 (via HEAD domain). Interacts with CDH1. Interacts (when unphosphorylated) with FLYWCH1, perhaps preventing interaction of CTNNB1 with TCF4, and thereby regulating transcription activation; phosphorylation of CTNNB1 may inhibit the interaction. Interacts (via the central armadillo domains) with probable transcriptional regulator ADNP (via N-terminal region); interaction is direct and stabilizes CTNNB1 by modulating its phosphorylation by glycogen synthase kinase-3 beta GSK3B. Interacts with NR5A2. Interacts with DSG2; the interaction promotes localization of CTNNB1 at cell junctions thus reducing its nuclear localization and subsequent transcription of CTNNB1/TCF-target genes. Post-translationally, phosphorylation at Ser-552 by AMPK promotes stabilization of the protein, enhancing TCF/LEF-mediated transcription. Phosphorylation by GSK3B requires prior phosphorylation of Ser-45 by another kinase. Phosphorylation proceeds then from Thr-41 to Ser-37 and Ser-33. Phosphorylated by NEK2. EGF stimulates tyrosine phosphorylation. Phosphorylated on Ser-33 and Ser-37 by HIPK2 and GSK3B, this phosphorylation triggers proteasomal degradation. Phosphorylation on Ser-191 and Ser-246 by CDK5. Phosphorylation by CDK2 regulates insulin internalization. Phosphorylation by PTK6 at Tyr-64, Tyr-142, Tyr-331 and/or Tyr-333 with the predominant site at Tyr-64 is not essential for inhibition of transcriptional activity. Phosphorylation by SRC at Tyr-333 promotes interaction with isoform M2 of PKM (PKM2); promoting transcription activation. In terms of processing, ubiquitinated by the SCF(BTRC) E3 ligase complex when phosphorylated by GSK3B, leading to its degradation. Ubiquitinated by a E3 ubiquitin ligase complex containing UBE2D1, SIAH1, CACYBP/SIP, SKP1, APC and TBL1X, leading to its subsequent proteasomal degradation. Ubiquitinated and degraded following interaction with SOX9. Ubiquitinated via 'Lys-11'- and 'Lys-29'-linked ubiquitin chains by UBR5, leading to its stabilization. S-nitrosylation at Cys-619 within adherens junctions promotes VEGF-induced, NO-dependent endothelial cell permeability by disrupting interaction with E-cadherin, thus mediating disassembly adherens junctions. Post-translationally, O-glycosylation at Ser-23 decreases nuclear localization and transcriptional activity, and increases localization to the plasma membrane and interaction with E-cadherin CDH1. In terms of processing, deacetylated at Lys-49 by SIRT1. In terms of tissue distribution, expressed in cerebellar granule neurons (at protein level). Expressed in the intestinal epithelium (at protein level). Abundantly expressed in the tooth, skin, lung, kidney, eye and brain with weak expression in the liver and heart.

It is found in the cytoplasm. Its subcellular location is the nucleus. The protein resides in the cytoskeleton. It localises to the cell junction. The protein localises to the adherens junction. It is found in the cell membrane. Its subcellular location is the microtubule organizing center. The protein resides in the centrosome. It localises to the spindle pole. The protein localises to the synapse. It is found in the cilium basal body. In terms of biological role, key downstream component of the canonical Wnt signaling pathway. In the absence of Wnt, forms a complex with AXIN1, AXIN2, APC, CSNK1A1 and GSK3B that promotes phosphorylation on N-terminal Ser and Thr residues and ubiquitination of CTNNB1 via BTRC and its subsequent degradation by the proteasome. In the presence of Wnt ligand, CTNNB1 is not ubiquitinated and accumulates in the nucleus, where it acts as a coactivator for transcription factors of the TCF/LEF family, leading to activate Wnt responsive genes. Also acts as a coactivator for other transcription factors, such as NR5A2. Promotes epithelial to mesenchymal transition/mesenchymal to epithelial transition (EMT/MET) via driving transcription of CTNNB1/TCF-target genes. Involved in the regulation of cell adhesion, as component of an E-cadherin:catenin adhesion complex. Acts as a negative regulator of centrosome cohesion. Involved in the CDK2/PTPN6/CTNNB1/CEACAM1 pathway of insulin internalization. Blocks anoikis of malignant kidney and intestinal epithelial cells and promotes their anchorage-independent growth by down-regulating DAPK2. Disrupts PML function and PML-NB formation by inhibiting RANBP2-mediated sumoylation of PML. Promotes neurogenesis by maintaining sympathetic neuroblasts within the cell cycle. Involved in chondrocyte differentiation via interaction with SOX9: SOX9-binding competes with the binding sites of TCF/LEF within CTNNB1, thereby inhibiting the Wnt signaling. Acts as a positive regulator of odontoblast differentiation during mesenchymal tooth germ formation, via promoting the transcription of differentiation factors such as LEF1, BMP2 and BMP4. Activity is repressed in a MSX1-mediated manner at the bell stage of mesenchymal tooth germ formation which prevents premature differentiation of odontoblasts. The sequence is that of Catenin beta-1 from Mus musculus (Mouse).